The sequence spans 182 residues: ADP-ribosylation factor-like protein 3 (182 aa).

Glycine 2 carries the N-myristoyl glycine lipid modification. Residue serine 5 is modified to Phosphoserine. GTP-binding positions include 24–31 (GLDNAGKT), threonine 48, 67–71 (DIGGQ), glycine 70, 126–129 (NKQD), and 159–161 (SAL). Mg(2+) contacts are provided by threonine 31 and threonine 48.

This sequence belongs to the small GTPase superfamily. Arf family. Found in a complex with ARL3, RP2 and UNC119 (or UNC119B); RP2 induces hydrolysis of GTP ARL3 in the complex, leading to the release of UNC119 (or UNC119B). Interacts with RP2; interaction is direct and stimulated with the activated GTP-bound form of ARL3. Interacts with SYS1. Interacts with ARL2BP; the GTP-bound form interacts with ARL2BP. Microtubule-associated protein. Does not interact with TBCC. Interacts with RP2. Interacts with PDE6D; the interaction occurs specifically with the GTP-bound form of ARL3. Interacts with GGA1; the interaction recruits PKD1:PKD2 complex to trans-Golgi network and is required for ciliary targeting of PKD1:PKD2 complex. Interacts with DNAAF9.

It is found in the golgi apparatus membrane. It localises to the cytoplasm. The protein resides in the cytoskeleton. The protein localises to the spindle. Its subcellular location is the nucleus. It is found in the microtubule organizing center. It localises to the centrosome. The protein resides in the cell projection. The protein localises to the cilium. Small GTP-binding protein which cycles between an inactive GDP-bound and an active GTP-bound form, and the rate of cycling is regulated by guanine nucleotide exchange factors (GEF) and GTPase-activating proteins (GAP). Required for normal cytokinesis and cilia signaling. Requires assistance from GTPase-activating proteins (GAPs) like RP2 and PDE6D, in order to cycle between inactive GDP-bound and active GTP-bound forms. Required for targeting proteins to the cilium, including myristoylated NPHP3 and prenylated INPP5E. Targets NPHP3 to the ciliary membrane by releasing myristoylated NPHP3 from UNC119B cargo adapter into the cilium. Required for PKD1:PKD2 complex targeting from the trans-Golgi network to the cilium. This is ADP-ribosylation factor-like protein 3 (Arl3) from Rattus norvegicus (Rat).